The following is a 449-amino-acid chain: Acetolactate synthase small subunit 1, chloroplastic (449 aa).

A chloroplast-targeting transit peptide spans 1 to 30; it reads MEHIQTRTTLSQLSTLPSDKRLGAIRFKCL. ACT domains are found at residues 31 to 98 and 259 to 333; these read LVMK…DLSK and TLSM…DITH.

The protein belongs to the acetolactate synthase small subunit family. In terms of assembly, the acetolactate synthase complex contains both large catalytic subunits and small regulatory subunits.

It is found in the plastid. The protein localises to the chloroplast. It participates in amino-acid biosynthesis; L-isoleucine biosynthesis; L-isoleucine from 2-oxobutanoate: step 1/4. Its pathway is amino-acid biosynthesis; L-valine biosynthesis; L-valine from pyruvate: step 1/4. Regulatory subunit of acetohydroxy-acid synthase. Probably involved in feedback inhibition by branched-chain amino acids. Not involved in herbicide tolerance. This Nicotiana plumbaginifolia (Leadwort-leaved tobacco) protein is Acetolactate synthase small subunit 1, chloroplastic.